A 156-amino-acid polypeptide reads, in one-letter code: WASQVSENRPVCKAIIQGKQFEGLVDTGADVSIIALNQWPKNWPKQKAVTGLVGIGTASEVYQSTEILHCLGPDNQESTVQPMITSIPLNLWGRDLLQQWGAEITMPAPLYSPTSQKIMTKMGYIPGKGLGKNEDGIKIPVEAKINQKREGIGYPF.

One can recognise a Peptidase A2 domain in the interval 21–96 (FEGLVDTGAD…IPLNLWGRDL (76 aa)). D26 is an active-site residue. Residues 111 to 156 (YSPTSQKIMTKMGYIPGKGLGKNEDGIKIPVEAKINQKREGIGYPF) form the G-patch domain.

It belongs to the peptidase A2 family. HERV class-II K(HML-2) subfamily. As to quaternary structure, active as a homodimer. Autoproteolytically processed at the N-terminus. Expected C-terminal autoprocessing not detected. The sequence shown is that of the processed Pro protein.

The enzyme catalyses Processing at the authentic HIV-1 PR recognition site and release of the mature p17 matrix and the p24 capsid protein, as a result of the cleavage of the -SQNY-|-PIVQ- cleavage site.. In terms of biological role, retroviral proteases have roles in the processing of the primary translation products and the maturation of the viral particle. Endogenous Pro proteins may have kept, lost or modified their original function during evolution. This Homo sapiens (Human) protein is Endogenous retrovirus group K member 113 Pro protein (HERVK_113).